The primary structure comprises 308 residues: Phosphoribosylaminoimidazole-succinocarboxamide synthase (308 aa).

Belongs to the SAICAR synthetase family.

The enzyme catalyses 5-amino-1-(5-phospho-D-ribosyl)imidazole-4-carboxylate + L-aspartate + ATP = (2S)-2-[5-amino-1-(5-phospho-beta-D-ribosyl)imidazole-4-carboxamido]succinate + ADP + phosphate + 2 H(+). It functions in the pathway purine metabolism; IMP biosynthesis via de novo pathway; 5-amino-1-(5-phospho-D-ribosyl)imidazole-4-carboxamide from 5-amino-1-(5-phospho-D-ribosyl)imidazole-4-carboxylate: step 1/2. The sequence is that of Phosphoribosylaminoimidazole-succinocarboxamide synthase from Xylella fastidiosa (strain 9a5c).